We begin with the raw amino-acid sequence, 295 residues long: Polyisoprenoid diphosphate/phosphate phosphohydrolase PLPP6 (295 aa).

Disordered stretches follow at residues 1–39 (MPSPRRSMEGRPLGVSASSSSSSPGSPAHGGGGGGSRFE) and 61–90 (SESPVHRRGSFPLAAAGPSQSPAPPLPEED). At 1–132 (MPSPRRSMEG…ESSSWGSVRP (132 aa)) the chain is on the cytoplasmic side. Low complexity predominate over residues 16-27 (SASSSSSSPGSP). Phosphoserine occurs at positions 26, 36, and 70. A helical membrane pass occupies residues 133–153 (LMKLLEISGHGIPWLLGTLYC). At 154–164 (LCRSDSWAGRE) the chain is on the lumenal side. A helical transmembrane segment spans residues 165–185 (VLMNLLFALLLDLLLVALIKG). A phosphatase sequence motif I region spans residues 184–192 (KGLVRRRRP). At 186-228 (LVRRRRPAHNQMDMFVTLSVDKYSFPSGHATRAALMSRFILNH) the chain is on the cytoplasmic side. Residues 211 to 214 (PSGH) are phosphatase sequence motif II. H214 functions as the Proton donors in the catalytic mechanism. The helical transmembrane segment at 229-249 (LVLAIPLRVLVVLWAFVLGLS) threads the bilayer. The interval 249–260 (SRVMLGRHNVTD) is phosphatase sequence motif III. Over 250 to 260 (RVMLGRHNVTD) the chain is Lumenal. Residue H256 is the Nucleophile of the active site. Residues 261–281 (VAFGFFLGYMQYSIVDYCWLS) form a helical membrane-spanning segment. The Cytoplasmic segment spans residues 282 to 295 (PHNAPVLFLLWSQR).

The protein belongs to the PA-phosphatase related phosphoesterase family. In terms of processing, phosphorylation by PKC activates the phosphatase activity towards presqualene diphosphate. As to expression, widely expressed. Expressed in most organs, in particular gastrointestinal organs, spleen, placenta, kidney, thymus and brain.

It localises to the endoplasmic reticulum membrane. The protein localises to the nucleus envelope. It is found in the nucleus inner membrane. It carries out the reaction presqualene diphosphate + H2O = presqualene phosphate + phosphate + H(+). It catalyses the reaction presqualene phosphate + H2O = presqualene alcohol + phosphate. The catalysed reaction is (2E,6E)-farnesyl diphosphate + H2O = (2E,6E)-farnesyl phosphate + phosphate + H(+). The enzyme catalyses (2E,6E)-farnesyl phosphate + H2O = (2E,6E)-farnesol + phosphate. It carries out the reaction (2E,6E,10E)-geranylgeranyl diphosphate + H2O = (2E,6E,10E)-geranylgeranyl phosphate + phosphate + H(+). It catalyses the reaction (2E,6E,10E)-geranylgeranyl phosphate + H2O = (2E,6E,10E)-geranylgeraniol + phosphate. The catalysed reaction is (2E)-geranyl diphosphate + H2O = (2E)-geranyl phosphate + phosphate + H(+). The enzyme catalyses (2E)-geranyl phosphate + H2O = (2E)-geraniol + phosphate. It carries out the reaction 1,2-dihexadecanoyl-sn-glycero-3-phosphate + H2O = 1,2-dihexadecanoyl-sn-glycerol + phosphate. Its activity is regulated as follows. Inhibited by propranolol. Not inhibited by N-ethylmaleimide or bromoenolactome. In terms of biological role, magnesium-independent polyisoprenoid diphosphatase that catalyzes the sequential dephosphorylation of presqualene, farnesyl, geranyl and geranylgeranyl diphosphates. Functions in the innate immune response through the dephosphorylation of presqualene diphosphate which acts as a potent inhibitor of the signaling pathways contributing to polymorphonuclear neutrophils activation. May regulate the biosynthesis of cholesterol and related sterols by dephosphorylating presqualene and farnesyl diphosphate, two key intermediates in this biosynthetic pathway. May also play a role in protein prenylation by acting on farnesyl diphosphate and its derivative geranylgeranyl diphosphate, two precursors for the addition of isoprenoid anchors to membrane proteins. Has a lower activity towards phosphatidic acid (PA), but through phosphatidic acid dephosphorylation may participate in the biosynthesis of phospholipids and triacylglycerols. May also act on ceramide-1-P, lysophosphatidic acid (LPA) and sphing-4-enine 1-phosphate/sphingosine-1-phosphate. This is Polyisoprenoid diphosphate/phosphate phosphohydrolase PLPP6 from Homo sapiens (Human).